Here is a 105-residue protein sequence, read N- to C-terminus: Small ribosomal subunit protein uS17 (105 aa).

This sequence belongs to the universal ribosomal protein uS17 family. As to quaternary structure, part of the 30S ribosomal subunit.

Functionally, one of the primary rRNA binding proteins, it binds specifically to the 5'-end of 16S ribosomal RNA. The protein is Small ribosomal subunit protein uS17 of Thermus thermophilus (strain ATCC BAA-163 / DSM 7039 / HB27).